Here is a 147-residue protein sequence, read N- to C-terminus: Ribosomal RNA large subunit methyltransferase H (147 aa).

S-adenosyl-L-methionine is bound by residues Leu66, Gly95, and 114 to 119 (LSELTF).

This sequence belongs to the RNA methyltransferase RlmH family. In terms of assembly, homodimer.

It localises to the cytoplasm. It catalyses the reaction pseudouridine(1915) in 23S rRNA + S-adenosyl-L-methionine = N(3)-methylpseudouridine(1915) in 23S rRNA + S-adenosyl-L-homocysteine + H(+). Specifically methylates the pseudouridine at position 1915 (m3Psi1915) in 23S rRNA. This Synechococcus sp. (strain RCC307) protein is Ribosomal RNA large subunit methyltransferase H.